The following is a 382-amino-acid chain: Ribosomal RNA large subunit methyltransferase G (382 aa).

Belongs to the methyltransferase superfamily. RlmG family.

The protein resides in the cytoplasm. It catalyses the reaction guanosine(1835) in 23S rRNA + S-adenosyl-L-methionine = N(2)-methylguanosine(1835) in 23S rRNA + S-adenosyl-L-homocysteine + H(+). Functionally, specifically methylates the guanine in position 1835 (m2G1835) of 23S rRNA. This Aliivibrio fischeri (strain MJ11) (Vibrio fischeri) protein is Ribosomal RNA large subunit methyltransferase G.